The chain runs to 800 residues: Phenylalanine--tRNA ligase beta subunit (800 aa).

A tRNA-binding domain is found at 39–154; that stretch reads TKDIKKLVVG…EAVKPGTDAL (116 aa). Residues 408–483 form the B5 domain; the sequence is SFVTPIKITA…RIYGYDDIPS (76 aa). Mg(2+) contacts are provided by Asp-461, Asp-467, Glu-470, and Glu-471. Residues 708–800 form the FDX-ACB domain; sequence PRFPGVTRDI…ALKKHGAIIR (93 aa).

This sequence belongs to the phenylalanyl-tRNA synthetase beta subunit family. Type 1 subfamily. Tetramer of two alpha and two beta subunits. The cofactor is Mg(2+).

The protein localises to the cytoplasm. It carries out the reaction tRNA(Phe) + L-phenylalanine + ATP = L-phenylalanyl-tRNA(Phe) + AMP + diphosphate + H(+). This is Phenylalanine--tRNA ligase beta subunit from Staphylococcus epidermidis (strain ATCC 35984 / DSM 28319 / BCRC 17069 / CCUG 31568 / BM 3577 / RP62A).